Consider the following 296-residue polypeptide: Lipoyl synthase (296 aa).

[4Fe-4S] cluster-binding residues include cysteine 37, cysteine 42, cysteine 48, cysteine 63, cysteine 67, cysteine 70, and serine 276. In terms of domain architecture, Radical SAM core spans 49–265 (WSKKHTTVMI…ERLAKTKGFL (217 aa)).

Belongs to the radical SAM superfamily. Lipoyl synthase family. [4Fe-4S] cluster is required as a cofactor.

It is found in the cytoplasm. The enzyme catalyses [[Fe-S] cluster scaffold protein carrying a second [4Fe-4S](2+) cluster] + N(6)-octanoyl-L-lysyl-[protein] + 2 oxidized [2Fe-2S]-[ferredoxin] + 2 S-adenosyl-L-methionine + 4 H(+) = [[Fe-S] cluster scaffold protein] + N(6)-[(R)-dihydrolipoyl]-L-lysyl-[protein] + 4 Fe(3+) + 2 hydrogen sulfide + 2 5'-deoxyadenosine + 2 L-methionine + 2 reduced [2Fe-2S]-[ferredoxin]. It functions in the pathway protein modification; protein lipoylation via endogenous pathway; protein N(6)-(lipoyl)lysine from octanoyl-[acyl-carrier-protein]: step 2/2. Catalyzes the radical-mediated insertion of two sulfur atoms into the C-6 and C-8 positions of the octanoyl moiety bound to the lipoyl domains of lipoate-dependent enzymes, thereby converting the octanoylated domains into lipoylated derivatives. The protein is Lipoyl synthase of Rickettsia rickettsii (strain Iowa).